A 361-amino-acid chain; its full sequence is Aromatic amino acid aminotransferase (361 aa).

Lys221 is subject to N6-(pyridoxal phosphate)lysine.

Belongs to the class-II pyridoxal-phosphate-dependent aminotransferase family. Homodimer. Requires pyridoxal 5'-phosphate as cofactor.

It catalyses the reaction an aromatic L-alpha-amino acid + 2-oxoglutarate = an aromatic oxo-acid + L-glutamate. Its function is as follows. Aminotransferase that catalyzes the conversion of aromatic amino acids and 2-oxoglutarate into corresponding aromatic oxo acids and L-glutamate. This chain is Aromatic amino acid aminotransferase, found in Mycobacterium ulcerans (strain Agy99).